The primary structure comprises 133 residues: ATP synthase epsilon chain (133 aa).

Belongs to the ATPase epsilon chain family. In terms of assembly, F-type ATPases have 2 components, CF(1) - the catalytic core - and CF(0) - the membrane proton channel. CF(1) has five subunits: alpha(3), beta(3), gamma(1), delta(1), epsilon(1). CF(0) has three main subunits: a, b and c.

It localises to the cell membrane. Produces ATP from ADP in the presence of a proton gradient across the membrane. The protein is ATP synthase epsilon chain (atpC) of Clostridium acetobutylicum (strain ATCC 824 / DSM 792 / JCM 1419 / IAM 19013 / LMG 5710 / NBRC 13948 / NRRL B-527 / VKM B-1787 / 2291 / W).